A 570-amino-acid polypeptide reads, in one-letter code: A-type ATP synthase subunit A (570 aa).

223-230 lines the ATP pocket; sequence GPFGSGKT.

Belongs to the ATPase alpha/beta chains family. In terms of assembly, has multiple subunits with at least A(3), B(3), C, D, E, F, H, I and proteolipid K(x).

It localises to the cell membrane. It catalyses the reaction ATP + H2O + 4 H(+)(in) = ADP + phosphate + 5 H(+)(out). Component of the A-type ATP synthase that produces ATP from ADP in the presence of a proton gradient across the membrane. The A chain is the catalytic subunit. In Nanoarchaeum equitans (strain Kin4-M), this protein is A-type ATP synthase subunit A.